Here is a 337-residue protein sequence, read N- to C-terminus: Putative [LysW]-lysine/[LysW]-ornithine hydrolase (337 aa).

His-67 serves as a coordination point for Zn(2+). The active site involves Asp-69. Zn(2+) is bound at residue Asp-91. Glu-118 (proton acceptor) is an active-site residue. Residues Glu-119, Glu-140, and His-298 each coordinate Zn(2+).

This sequence belongs to the peptidase M20A family. LysK subfamily. Zn(2+) is required as a cofactor. Requires Co(2+) as cofactor.

It localises to the cytoplasm. The catalysed reaction is [amino-group carrier protein]-C-terminal-gamma-(L-lysyl)-L-glutamate + H2O = [amino-group carrier protein]-C-terminal-L-glutamate + L-lysine. It catalyses the reaction [amino-group carrier protein]-C-terminal-gamma-(L-ornithyl)-L-glutamate + H2O = [amino-group carrier protein]-C-terminal-L-glutamate + L-ornithine. It participates in amino-acid biosynthesis; L-lysine biosynthesis via AAA pathway; L-lysine from L-alpha-aminoadipate (Thermus route): step 5/5. It functions in the pathway amino-acid biosynthesis; L-arginine biosynthesis. Its function is as follows. Catalyzes the release of L-lysine from [LysW]-gamma-L-lysine and the release of L-ornithine from [LysW]-L-ornithine. The sequence is that of Putative [LysW]-lysine/[LysW]-ornithine hydrolase from Pyrococcus abyssi (strain GE5 / Orsay).